We begin with the raw amino-acid sequence, 89 residues long: Mitochondrial import inner membrane translocase subunit Tim9 (89 aa).

An N-acetylalanine modification is found at Ala2. Positions 28–52 match the Twin CX3C motif motif; it reads CFLDCVKDFTTREVKPEETTCSEHC. Cystine bridges form between Cys28/Cys52 and Cys32/Cys48.

This sequence belongs to the small Tim family. As to quaternary structure, heterohexamer; composed of 3 copies of TIMM9 and 3 copies of TIMM10/TIM10A, named soluble 70 kDa complex. The complex forms a 6-bladed alpha-propeller structure and associates with the TIMM22 component of the TIM22 complex. Interacts with multi-pass transmembrane proteins in transit. Also forms a complex composed of TIMM9, TIMM10/TIM10A and FXC1/TIM10B. Ubiquitous, with highest expression in heart, kidney, liver and skeletal muscle.

The protein localises to the mitochondrion inner membrane. Its function is as follows. Mitochondrial intermembrane chaperone that participates in the import and insertion of multi-pass transmembrane proteins into the mitochondrial inner membrane. May also be required for the transfer of beta-barrel precursors from the TOM complex to the sorting and assembly machinery (SAM complex) of the outer membrane. Acts as a chaperone-like protein that protects the hydrophobic precursors from aggregation and guide them through the mitochondrial intermembrane space. The sequence is that of Mitochondrial import inner membrane translocase subunit Tim9 (TIMM9) from Homo sapiens (Human).